A 57-amino-acid polypeptide reads, in one-letter code: DNA gyrase inhibitor YacG (57 aa).

Zn(2+)-binding residues include Cys5, Cys8, Cys20, and Cys24.

The protein belongs to the DNA gyrase inhibitor YacG family. As to quaternary structure, interacts with GyrB. The cofactor is Zn(2+).

Inhibits all the catalytic activities of DNA gyrase by preventing its interaction with DNA. Acts by binding directly to the C-terminal domain of GyrB, which probably disrupts DNA binding by the gyrase. The polypeptide is DNA gyrase inhibitor YacG (Caulobacter vibrioides (strain ATCC 19089 / CIP 103742 / CB 15) (Caulobacter crescentus)).